Here is a 512-residue protein sequence, read N- to C-terminus: GMP synthase [glutamine-hydrolyzing] (512 aa).

In terms of domain architecture, Glutamine amidotransferase type-1 spans 7-197 (LVLVVDFGGQ…LFKVAGLKAD (191 aa)). Residue cysteine 84 is the Nucleophile of the active site. Residues histidine 171 and glutamate 173 contribute to the active site. In terms of domain architecture, GMPS ATP-PPase spans 198–387 (WSMASFAEEK…LGIPHKLVWR (190 aa)). An ATP-binding site is contributed by 225-231 (SGGVDSS).

As to quaternary structure, homodimer.

It carries out the reaction XMP + L-glutamine + ATP + H2O = GMP + L-glutamate + AMP + diphosphate + 2 H(+). It participates in purine metabolism; GMP biosynthesis; GMP from XMP (L-Gln route): step 1/1. Its function is as follows. Catalyzes the synthesis of GMP from XMP. In Clostridium novyi (strain NT), this protein is GMP synthase [glutamine-hydrolyzing].